The following is a 396-amino-acid chain: RNA binding protein fox-1 homolog 1 (396 aa).

Residues 1–119 (MNCEREQLRG…ESKSQPKRLH (119 aa)) are disordered. A compositionally biased stretch (polar residues) spans 67-86 (PPTQTHSEQSADTSAQTVSG). Low complexity predominate over residues 87–98 (TATQTDDAAPTD). Over residues 99–112 (GQPQTQPSENTESK) the composition is skewed to polar residues. The region spanning 116–192 (KRLHVSNIPF…RKIEVNNATA (77 aa)) is the RRM domain. 2 positions are modified to asymmetric dimethylarginine: Arg-316 and Ala-337. An Omega-N-methylarginine modification is found at Arg-387.

In terms of assembly, binds to the C-terminus of ATXN2. In terms of tissue distribution, detected in brain (at protein level). Detected in heart, brain, neurons, skeletal muscle and embryo.

Its subcellular location is the nucleus. It localises to the cytoplasm. Its function is as follows. RNA-binding protein that regulates alternative splicing events by binding to 5'-UGCAUGU-3' elements. Prevents binding of U2AF2 to the 3'-splice site. Regulates alternative splicing of tissue-specific exons and of differentially spliced exons during erythropoiesis. This Mus musculus (Mouse) protein is RNA binding protein fox-1 homolog 1 (Rbfox1).